The chain runs to 572 residues: Receptor-transporting protein 5 (572 aa).

A 3CxxC-type zinc finger spans residues 52 to 148; sequence SRLQCGHCPG…AYEGCCEACE (97 aa). The helical transmembrane segment at 544–560 threads the bilayer; sequence FWIWVSMTVCVFWLMCM.

Its subcellular location is the membrane. This is Receptor-transporting protein 5 (RTP5) from Homo sapiens (Human).